The following is an 84-amino-acid chain: Putative protein BCE-1 (84 aa).

The chain is Putative protein BCE-1 (BCE1) from Homo sapiens (Human).